A 212-amino-acid chain; its full sequence is Thymidylate kinase (212 aa).

Position 10–17 (10–17) interacts with ATP; it reads GPDGAGKT.

The protein belongs to the thymidylate kinase family.

The enzyme catalyses dTMP + ATP = dTDP + ADP. Functionally, phosphorylation of dTMP to form dTDP in both de novo and salvage pathways of dTTP synthesis. The polypeptide is Thymidylate kinase (Lactobacillus delbrueckii subsp. bulgaricus (strain ATCC 11842 / DSM 20081 / BCRC 10696 / JCM 1002 / NBRC 13953 / NCIMB 11778 / NCTC 12712 / WDCM 00102 / Lb 14)).